A 929-amino-acid polypeptide reads, in one-letter code: Thrombospondin-3b (929 aa).

The first 22 residues, 1–22 (MELRKIVPNLLVLYVAVHFSQS), serve as a signal peptide directing secretion. The Laminin G-like domain maps to 24–192 (EIKVINVLEL…VESVKLALGG (169 aa)). Residue Asn45 is glycosylated (N-linked (GlcNAc...) asparagine). Cystine bridges form between Cys277–Cys288, Cys282–Cys299, Cys319–Cys343, Cys349–Cys362, Cys356–Cys371, Cys374–Cys386, Cys392–Cys406, Cys400–Cys416, Cys418–Cys429, Cys445–Cys452, Cys457–Cys477, Cys493–Cys513, Cys516–Cys536, Cys552–Cys572, Cys575–Cys595, Cys613–Cys633, Cys653–Cys673, and Cys689–Cys910. Positions 345–384 (DIDECAELSGSCVPNSVCINTVGSFKCGQCKAGFVGNQTV) constitute an EGF-like 1; calcium-binding domain. An N-linked (GlcNAc...) asparagine glycan is attached at Asn381. One can recognise an EGF-like 2 domain in the interval 388–430 (ARRTCETLGYSPCDVNSHCVMGRNSDVSCVCNVGWAGNGNICG). TSP type-3 repeat units follow at residues 431 to 465 (PDSD…NSGQ), 466 to 501 (EDTD…NKDQ), 502 to 524 (QNSD…NGDQ), 525 to 560 (LDTD…NPMQ), 561 to 583 (TDRD…DPLQ), 584 to 621 (SDMD…NSSQ), 622 to 661 (LDSD…NPSQ), and 662 to 697 (IDTD…EVTM). The segment covering 602-613 (DGDGYQDTRDNC) has biased composition (basic and acidic residues). The interval 602–651 (DGDGYQDTRDNCPEVPNSSQLDSDNDGIGDECDDDDDNDGIPDILPPGPD) is disordered. N-linked (GlcNAc...) asparagine glycosylation is present at Asn618. A compositionally biased stretch (acidic residues) spans 624–641 (SDNDGIGDECDDDDDNDG). A TSP C-terminal domain is found at 701–915 (RAFQTVILDP…LGYRCNDSIP (215 aa)). Residue Asn911 is glycosylated (N-linked (GlcNAc...) asparagine).

It belongs to the thrombospondin family. Oligomer; disulfide-linked.

Functionally, adhesive glycoprotein that mediates cell-to-cell and cell-to-matrix interactions. Can bind to fibrinogen, fibronectin, laminin and type V collagen. This chain is Thrombospondin-3b, found in Danio rerio (Zebrafish).